Reading from the N-terminus, the 502-residue chain is Glycerol kinase (502 aa).

Residue T14 coordinates ADP. Positions 14, 15, and 16 each coordinate ATP. Position 14 (T14) interacts with sn-glycerol 3-phosphate. Residue R18 participates in ADP binding. Residues R84, E85, Y137, and D247 each contribute to the sn-glycerol 3-phosphate site. Glycerol-binding residues include R84, E85, Y137, D247, and Q248. ADP-binding residues include T269 and G312. ATP is bound by residues T269, G312, Q316, and G413. The ADP site is built by G413 and N417.

It belongs to the FGGY kinase family. Homotetramer and homodimer (in equilibrium). Heterodimer with EIIA-Glc. Binds 1 zinc ion per glycerol kinase EIIA-Glc dimer. The zinc ion is important for dimerization.

It carries out the reaction glycerol + ATP = sn-glycerol 3-phosphate + ADP + H(+). It participates in polyol metabolism; glycerol degradation via glycerol kinase pathway; sn-glycerol 3-phosphate from glycerol: step 1/1. Activity of this regulatory enzyme is affected by several metabolites. Allosterically and non-competitively inhibited by fructose 1,6-bisphosphate (FBP) and unphosphorylated phosphocarrier protein EIIA-Glc (III-Glc), an integral component of the bacterial phosphotransferase (PTS) system. Key enzyme in the regulation of glycerol uptake and metabolism. Catalyzes the phosphorylation of glycerol to yield sn-glycerol 3-phosphate. The sequence is that of Glycerol kinase from Photorhabdus laumondii subsp. laumondii (strain DSM 15139 / CIP 105565 / TT01) (Photorhabdus luminescens subsp. laumondii).